A 355-amino-acid polypeptide reads, in one-letter code: MFEKIEELERRYQELEALLADPAVLGNQPEFRKLSREHSDLSALVESYRNYKKVLVEITGNRELLADPEMKEMAEAELEALEEQQAALEAEIKLLLLPKDPNDNKSVILEIRAGTGGDEAALFAGDLFRMYGRYAESNRWRVEVISASESEKGGFKEIVASVEGDGVFAKLKYESGTHRVQRVPETEAQGRIHTSACTVAIMPEAEDVDIDINPADLKIDVYRSSGAGGQHVNTTDSAVRITHLPTGTVVACQEERSQIKNRAKAMKVLKTRILDTIMQEQSARLAADRKQQVGSGDRSERIRTYNFPQGRMTDHRIGLTLYRLDAIMAGDIGEITDSLRVYYQMEALKQQSEAA.

An N5-methylglutamine modification is found at glutamine 230.

This sequence belongs to the prokaryotic/mitochondrial release factor family. Methylated by PrmC. Methylation increases the termination efficiency of RF1.

Its subcellular location is the cytoplasm. Its function is as follows. Peptide chain release factor 1 directs the termination of translation in response to the peptide chain termination codons UAG and UAA. This is Peptide chain release factor 1 from Geotalea uraniireducens (strain Rf4) (Geobacter uraniireducens).